The sequence spans 507 residues: Sugar transport protein 6 (507 aa).

Over 1 to 20 (MAVVVSNANAPAFEAKMTVY) the chain is Cytoplasmic. Transmembrane regions (helical) follow at residues 21 to 41 (VFIC…DIGI), 78 to 98 (FLQL…FVAS), 115 to 135 (IFFL…MLII), 138 to 158 (LFLG…LSEI), 165 to 185 (GGLN…ANIV), 199 to 219 (IALG…LLII), 280 to 300 (FIIG…AIMF), 318 to 338 (LSAV…IYLV), 345 to 365 (FLLL…GIIL), 381 to 401 (LVVV…WGPL), 418 to 438 (GFAV…QAFL), and 447 to 467 (GIFF…FFFI). Residues 468–507 (PETKGIAIDDMRESVWKPHWFWKRYMLPEDDHHDIEKRNA) are Cytoplasmic-facing.

It belongs to the major facilitator superfamily. Sugar transporter (TC 2.A.1.1) family. In terms of tissue distribution, pollen specific.

It is found in the membrane. With respect to regulation, inhibited by uncouplers such as 2,4-dinitrophenol and carbonyl cyanide-m-chlorophenyl-hydrazone. In terms of biological role, mediates an active uptake of hexoses, probably by sugar/hydrogen symport. Can transport glucose, 3-O-methylglucose, mannose, fructose and galactose, and, to a lower extent, xylose and ribulose. The polypeptide is Sugar transport protein 6 (STP6) (Arabidopsis thaliana (Mouse-ear cress)).